We begin with the raw amino-acid sequence, 227 residues long: MICOS complex subunit MIC19 (227 aa).

Gly2 carries the N-myristoyl glycine lipid modification. The residue at position 29 (Ser29) is a Phosphoserine. Disordered stretches follow at residues Asp34 to Glu61 and Glu73 to Asp92. The span at Ser39 to Tyr49 shows a compositional bias: polar residues. Tyr49 bears the Phosphotyrosine mark. Phosphoserine occurs at positions 50, 56, and 58. At Lys142 the chain carries N6-acetyllysine. One can recognise a CHCH domain in the interval His180 to Met222. Short sequence motifs (cx9C motif) lie at residues Cys183 to Cys193 and Cys204 to Cys214. 2 disulfide bridges follow: Cys183-Cys214 and Cys193-Cys204.

It belongs to the MICOS complex subunit Mic19 family. Metazoan Mic19 subfamily. Component of the mitochondrial contact site and cristae organizing system (MICOS) complex, composed of at least MICOS10/MIC10, CHCHD3/MIC19, CHCHD6/MIC25, APOOL/MIC27, IMMT/MIC60, APOO/MIC23/MIC26 and MICOS13/MIC13. This complex was also known under the names MINOS or MitOS complex. The MICOS complex associates with mitochondrial outer membrane proteins SAMM50, MTX1 and MTX2 (together described as components of the mitochondrial outer membrane sorting assembly machinery (SAM) complex) and DNAJC11, mitochondrial inner membrane protein TMEM11 and with HSPA9. The MICOS and SAM complexes together with DNAJC11 are part of a large protein complex spanning both membranes termed the mitochondrial intermembrane space bridging (MIB) complex. Interacts with HSPA1A/HSPA1B and OPA1, preferentially with the soluble OPA1 form. Interacts with IMMT/MIC60. As to quaternary structure, (Microbial infection) Interacts with human cytomegalovirus protein UL13; this interaction alters cristae architecture. As to expression, detected at low levels in brain, placenta, lung, liver, kidney and pancreas with increased levels in heart and skeletal muscle. Higher expression in primary lung cancers than in normal lung tissue.

It localises to the mitochondrion inner membrane. The protein localises to the cytoplasm. The protein resides in the nucleus. It is found in the mitochondrion. Its function is as follows. Component of the MICOS complex, a large protein complex of the mitochondrial inner membrane that plays crucial roles in the maintenance of crista junctions, inner membrane architecture, and formation of contact sites to the outer membrane. Plays an important role in the maintenance of the MICOS complex stability and the mitochondrial cristae morphology. Has also been shown to function as a transcription factor which binds to the BAG1 promoter and represses BAG1 transcription. This Homo sapiens (Human) protein is MICOS complex subunit MIC19 (CHCHD3).